The sequence spans 379 residues: Protein FAM53B (379 aa).

2 disordered regions span residues 206–257 (CPAE…HKQR) and 302–348 (AQND…AGKE). Positions 212–236 (SPESTPELQRRSGQSGLARSRSQPC) are enriched in polar residues. The span at 239-249 (NHQKIGVKRRR) shows a compositional bias: basic residues. The short motif at 246–249 (KRRR) is the Nuclear localization signal element. A compositionally biased stretch (polar residues) spans 326 to 342 (QSDSSSADALIHQSESS).

Belongs to the FAM53 family. In terms of assembly, interacts with ctnnb1. Mainly expressed in proliferating tissues.

Its subcellular location is the nucleus. Functionally, acts as a regulator of Wnt signaling pathway by regulating beta-catenin (ctnnb1) nuclear localization. Required for appendage regeneration by regulating cell proliferation. The polypeptide is Protein FAM53B (Danio rerio (Zebrafish)).